A 507-amino-acid polypeptide reads, in one-letter code: Efflux pump ustT (507 aa).

11 helical membrane passes run 59–79 (IAVVASLTFLITDIAGQIIVA), 146–166 (LLIAMVGCLLSDIWVGVVTWF), 180–200 (IWQLIGGGGASISSMAFAMIA), 216–236 (HAAVLVAELVSVPAGAALANF), 240–260 (IPVFGAAIFMVLGILFAYVVV), 316–336 (VLLIMASFFVCQLGRMISGIT), 359–379 (AGVNLFVLAAIIPALSYILVK), 398–418 (VCLIIGSFVMFLAASPGTLVF), 421–441 (TVFALGFAFSVTARSFLTGMV), 449–469 (VFTGVTTMLYGGLVIGSPMLA), and 481–501 (IWVGLPFLLAAVLFTLALGAI).

The protein belongs to the major facilitator superfamily.

It is found in the cell membrane. It participates in mycotoxin biosynthesis. Functionally, efflux pump; part of the gene cluster that mediates the biosynthesis of the secondary metabolite ustiloxin B, an antimitotic tetrapeptide. Probably involved in self-resistance through the export of ustiloxin B. The sequence is that of Efflux pump ustT from Aspergillus flavus (strain ATCC 200026 / FGSC A1120 / IAM 13836 / NRRL 3357 / JCM 12722 / SRRC 167).